A 374-amino-acid polypeptide reads, in one-letter code: Mitochondrial import inner membrane translocase subunit tim50 (374 aa).

A mitochondrion-targeting transit peptide spans 1 to 48; sequence MILNKVAKCYGKQIGFFGNKTTQFIKPNQTIFLIGGTKRLFTTQQQQS. The interval 42-97 is disordered; sequence TTQQQQSPKKEEPKSEQQKKVEDKTEEKEKEKDEEENENEKEKENEDGEGQKKKSK. Composition is skewed to basic and acidic residues over residues 49–72 and 81–93; these read PKKE…KEKE and EKEK…EGQK. The chain crosses the membrane as a helical span at residues 103 to 125; sequence IVTSVTSTFFAGVLVASTFGYLT. The region spanning 191 to 332 is the FCP1 homology domain; it reads PGGKKYTLVI…IELLPVLESF (142 aa).

Belongs to the TIM50 family. As to quaternary structure, component of the mitochondrial import inner membrane translocase complex.

Its subcellular location is the mitochondrion inner membrane. In terms of biological role, component of the mitochondrial import inner membrane translocase that mediates the translocation of transit peptide-containing proteins across the mitochondrial inner membrane. This Dictyostelium discoideum (Social amoeba) protein is Mitochondrial import inner membrane translocase subunit tim50 (timm50).